We begin with the raw amino-acid sequence, 337 residues long: Porphobilinogen deaminase (337 aa).

Cys254 is modified (S-(dipyrrolylmethanemethyl)cysteine).

The protein belongs to the HMBS family. Dipyrromethane serves as cofactor.

It catalyses the reaction 4 porphobilinogen + H2O = hydroxymethylbilane + 4 NH4(+). Its pathway is porphyrin-containing compound metabolism; protoporphyrin-IX biosynthesis; coproporphyrinogen-III from 5-aminolevulinate: step 2/4. In terms of biological role, tetrapolymerization of the monopyrrole PBG into the hydroxymethylbilane pre-uroporphyrinogen in several discrete steps. This Neurospora crassa (strain ATCC 24698 / 74-OR23-1A / CBS 708.71 / DSM 1257 / FGSC 987) protein is Porphobilinogen deaminase (pda-1).